The sequence spans 392 residues: Elongation factor Tu 2 (392 aa).

Residues 10-201 (KPHVNIGTIG…AVDSYIPTPE (192 aa)) enclose the tr-type G domain. Residues 19–26 (GHVDHGKT) are G1. Residue 19 to 26 (GHVDHGKT) coordinates GTP. Thr26 contacts Mg(2+). The G2 stretch occupies residues 55 to 59 (GITIS). The segment at 76 to 79 (DCPG) is G3. GTP is bound by residues 76–80 (DCPGH) and 131–134 (NKVD). Residues 131 to 134 (NKVD) form a G4 region. Residues 169-171 (SAL) are G5.

It belongs to the TRAFAC class translation factor GTPase superfamily. Classic translation factor GTPase family. EF-Tu/EF-1A subfamily. Monomer.

The protein localises to the cytoplasm. The enzyme catalyses GTP + H2O = GDP + phosphate + H(+). In terms of biological role, GTP hydrolase that promotes the GTP-dependent binding of aminoacyl-tRNA to the A-site of ribosomes during protein biosynthesis. The chain is Elongation factor Tu 2 from Rhizobium etli (strain ATCC 51251 / DSM 11541 / JCM 21823 / NBRC 15573 / CFN 42).